The chain runs to 149 residues: Large ribosomal subunit protein bL9 (149 aa).

Belongs to the bacterial ribosomal protein bL9 family.

Binds to the 23S rRNA. This Proteus mirabilis (strain HI4320) protein is Large ribosomal subunit protein bL9.